Reading from the N-terminus, the 235-residue chain is Probable flavin-dependent thymidylate synthase (235 aa).

A ThyX domain is found at Met-1–Glu-229. Residues Ser-70 and Arg-93–Arg-95 contribute to the FAD site. DUMP-binding positions include Glu-90 to Arg-93, Ser-103 to Arg-105, and Arg-168. Positions Arg-93–Ser-103 match the ThyX motif motif. Asn-184 to Arg-186 serves as a coordination point for FAD. Arg-195 lines the dUMP pocket. The active-site Involved in ionization of N3 of dUMP, leading to its activation is Arg-195.

It belongs to the thymidylate synthase ThyX family. Homotetramer. FAD serves as cofactor.

The enzyme catalyses dUMP + (6R)-5,10-methylene-5,6,7,8-tetrahydrofolate + NADPH + H(+) = dTMP + (6S)-5,6,7,8-tetrahydrofolate + NADP(+). The protein operates within pyrimidine metabolism; dTTP biosynthesis. Its function is as follows. Catalyzes the reductive methylation of 2'-deoxyuridine-5'-monophosphate (dUMP) to 2'-deoxythymidine-5'-monophosphate (dTMP) while utilizing 5,10-methylenetetrahydrofolate (mTHF) as the methyl donor, and NADPH and FADH(2) as the reductant. The chain is Probable flavin-dependent thymidylate synthase (48) from Mycobacterium (Mycobacteriophage D29).